A 306-amino-acid chain; its full sequence is D-alanine--D-alanine ligase (306 aa).

The region spanning 102–300 is the ATP-grasp domain; it reads KIIAANAGVC…YGDIVQWMVE (199 aa). Residue 128–183 participates in ATP binding; it reads PMEPPYVIKPVCEGSSFGVVIVQENEAVPPHNIGGSEWGYADEVMVEKYIPGRELT. Mg(2+)-binding residues include Asp-253, Glu-267, and Asn-269.

The protein belongs to the D-alanine--D-alanine ligase family. Mg(2+) is required as a cofactor. It depends on Mn(2+) as a cofactor.

It localises to the cytoplasm. It catalyses the reaction 2 D-alanine + ATP = D-alanyl-D-alanine + ADP + phosphate + H(+). The protein operates within cell wall biogenesis; peptidoglycan biosynthesis. Functionally, cell wall formation. The polypeptide is D-alanine--D-alanine ligase (Bartonella tribocorum (strain CIP 105476 / IBS 506)).